The sequence spans 343 residues: 4-hydroxy-2-oxovalerate aldolase 1 (343 aa).

Positions 8–260 (ITVHDMSLRD…ETGVDVFAIS (253 aa)) constitute a Pyruvate carboxyltransferase domain. 16–17 (RD) contributes to the substrate binding site. Asp-17 serves as a coordination point for Mn(2+). The Proton acceptor role is filled by His-20. Ser-170 and His-199 together coordinate substrate. Mn(2+) is bound by residues His-199 and His-201. Tyr-290 lines the substrate pocket.

The protein belongs to the 4-hydroxy-2-oxovalerate aldolase family.

The catalysed reaction is (S)-4-hydroxy-2-oxopentanoate = acetaldehyde + pyruvate. This chain is 4-hydroxy-2-oxovalerate aldolase 1 (bphI), found in Burkholderia cenocepacia (strain ATCC BAA-245 / DSM 16553 / LMG 16656 / NCTC 13227 / J2315 / CF5610) (Burkholderia cepacia (strain J2315)).